The primary structure comprises 1549 residues: Ferredoxin-dependent glutamate synthase (1549 aa).

Cysteine 37 functions as the For GATase activity in the catalytic mechanism. In terms of domain architecture, Glutamine amidotransferase type-2 spans 37–435; the sequence is CGVGFIAHLD…PGEMIVLDLQ (399 aa). Residue 1116-1173 participates in FMN binding; that stretch reads LHEVHCLLVENNLREKVILRVDGGLRTGQDVVMAALLGADEYGFGTIAMIAGGCIMAR. Positions 1169, 1175, and 1180 each coordinate [3Fe-4S] cluster.

Belongs to the glutamate synthase family. In terms of assembly, monomer. It depends on [3Fe-4S] cluster as a cofactor. Requires FAD as cofactor. FMN serves as cofactor.

The protein resides in the plastid. Its subcellular location is the chloroplast stroma. The enzyme catalyses 2 oxidized [2Fe-2S]-[ferredoxin] + 2 L-glutamate = L-glutamine + 2 reduced [2Fe-2S]-[ferredoxin] + 2-oxoglutarate + 2 H(+). It functions in the pathway amino-acid biosynthesis; L-glutamate biosynthesis via GLT pathway; L-glutamate from 2-oxoglutarate and L-glutamine (ferredoxin route): step 1/1. It participates in energy metabolism; nitrogen metabolism. This Cyanidium caldarium (Red alga) protein is Ferredoxin-dependent glutamate synthase (gltB).